We begin with the raw amino-acid sequence, 161 residues long: 2-C-methyl-D-erythritol 2,4-cyclodiphosphate synthase (161 aa).

Residues aspartate 10 and histidine 12 each contribute to the a divalent metal cation site. 4-CDP-2-C-methyl-D-erythritol 2-phosphate is bound by residues aspartate 10–histidine 12 and histidine 36–serine 37. Histidine 44 provides a ligand contact to a divalent metal cation. 4-CDP-2-C-methyl-D-erythritol 2-phosphate is bound by residues aspartate 58–glycine 60, phenylalanine 63–aspartate 67, threonine 134–glutamate 137, phenylalanine 141, and arginine 144.

The protein belongs to the IspF family. As to quaternary structure, homotrimer. It depends on a divalent metal cation as a cofactor.

The catalysed reaction is 4-CDP-2-C-methyl-D-erythritol 2-phosphate = 2-C-methyl-D-erythritol 2,4-cyclic diphosphate + CMP. It functions in the pathway isoprenoid biosynthesis; isopentenyl diphosphate biosynthesis via DXP pathway; isopentenyl diphosphate from 1-deoxy-D-xylulose 5-phosphate: step 4/6. Functionally, involved in the biosynthesis of isopentenyl diphosphate (IPP) and dimethylallyl diphosphate (DMAPP), two major building blocks of isoprenoid compounds. Catalyzes the conversion of 4-diphosphocytidyl-2-C-methyl-D-erythritol 2-phosphate (CDP-ME2P) to 2-C-methyl-D-erythritol 2,4-cyclodiphosphate (ME-CPP) with a corresponding release of cytidine 5-monophosphate (CMP). In Shewanella putrefaciens (strain CN-32 / ATCC BAA-453), this protein is 2-C-methyl-D-erythritol 2,4-cyclodiphosphate synthase.